The primary structure comprises 97 residues: Small cell adhesion glycoprotein (97 aa).

At Met-1–Leu-36 the chain is on the extracellular side. O-linked (GalNAc...) threonine glycosylation occurs at Thr-7. Ser-9 is a glycosylation site (O-linked (GalNAc...) serine). Residues Thr-15, Thr-16, and Thr-24 are each glycosylated (O-linked (GalNAc...) threonine). Ser-26 carries an O-linked (GalNAc...) serine glycan. The chain crosses the membrane as a helical; Signal-anchor for type III membrane protein span at residues Ile-37–Phe-57. The Cytoplasmic portion of the chain corresponds to Tyr-58 to Ile-97.

This sequence belongs to the SMAGP family. In terms of processing, O-glycosylated. The O-glycan is modified with sialic acid residues. As to expression, detected in brain (at protein level). Highly expressed in kidney and placenta. Detected in skin, breast, heart, lung, liver, prostate, spleen, small intestine, colon and stomach.

The protein localises to the cell membrane. The protein resides in the cytoplasmic vesicle membrane. Functionally, may play a role in epithelial cell-cell contacts. May play a role in tumor invasiveness and metastasis formation. In Rattus norvegicus (Rat), this protein is Small cell adhesion glycoprotein (Smagp).